The chain runs to 228 residues: Ribosomal RNA small subunit methyltransferase G (228 aa).

S-adenosyl-L-methionine-binding positions include Gly89, Leu94, 140 to 141 (VE), and Arg159.

The protein belongs to the methyltransferase superfamily. RNA methyltransferase RsmG family.

It localises to the cytoplasm. It catalyses the reaction guanosine(527) in 16S rRNA + S-adenosyl-L-methionine = N(7)-methylguanosine(527) in 16S rRNA + S-adenosyl-L-homocysteine. Functionally, specifically methylates the N7 position of guanine in position 527 of 16S rRNA. The protein is Ribosomal RNA small subunit methyltransferase G of Burkholderia ambifaria (strain MC40-6).